Reading from the N-terminus, the 443-residue chain is 23S rRNA (uracil(1939)-C(5))-methyltransferase RlmD (443 aa).

Residues 12-70 form the TRAM domain; the sequence is AKKLSQKIALKVQRLDHLGAGIAEHQGKVVFIPGALPGETVEVQLTEQKKNYARAKLQR. The [4Fe-4S] cluster site is built by Cys-83, Cys-89, Cys-92, and Cys-171. S-adenosyl-L-methionine contacts are provided by Gln-276, Phe-305, Asn-310, Glu-326, Asp-353, and Asp-373. Cys-399 (nucleophile) is an active-site residue.

The protein belongs to the class I-like SAM-binding methyltransferase superfamily. RNA M5U methyltransferase family. RlmD subfamily.

The catalysed reaction is uridine(1939) in 23S rRNA + S-adenosyl-L-methionine = 5-methyluridine(1939) in 23S rRNA + S-adenosyl-L-homocysteine + H(+). Its function is as follows. Catalyzes the formation of 5-methyl-uridine at position 1939 (m5U1939) in 23S rRNA. The chain is 23S rRNA (uracil(1939)-C(5))-methyltransferase RlmD from Shewanella amazonensis (strain ATCC BAA-1098 / SB2B).